The primary structure comprises 175 residues: ATP synthase subunit d, mitochondrial (175 aa).

An N-acetylserine modification is found at Ser2.

F-type ATP synthases have 2 components, the catalytic core F(1) and the membrane-embedded component F(0), linked together by a central stalk and a peripheral stalk. The central stalk, also called rotor shaft, is often seen as part of F(1). The peripheral stalk is seen as part of F(0). F(0) contains the membrane channel next to the rotor. F-type ATP synthases form dimers but each monomer functions independently in ATP generation. The dimer consists of 18 different polypeptides: ATP1 (subunit alpha, part of F(1), 3 molecules per monomer), ATP2 (subunit beta, part of F(1), 3 molecules per monomer), ATP3 (subunit gamma, part of the central stalk), ATP4 (subunit b, part of the peripheral stalk), ATP5/OSCP (subunit 5/OSCP, part of the peripheral stalk), ATP6 (subunit a, part of the peripheral stalk), ATP7 (subunit d, part of the peripheral stalk), ATP8 (subunit 8, part of the peripheral stalk), OLI1 (subunit c, part of the rotor, 10 molecules per monomer), ATP14 (subunit h, part of the peripheral stalk), ATP15 (subunit epsilon, part of the central stalk), ATP16 (subunit delta, part of the central stalk), ATP17 (subunit f, part of the peripheral stalk), ATP18 (subunit i/j, part of the peripheral stalk). Dimer-specific subunits are ATP19 (subunit k, at interface between monomers), ATP20 (subunit g, at interface between monomers), TIM11 (subunit e, at interface between monomers). Also contains subunit L.

The protein resides in the mitochondrion inner membrane. Mitochondrial membrane ATP synthase (F(1)F(0) ATP synthase or Complex V) produces ATP from ADP in the presence of a proton gradient across the membrane which is generated by electron transport complexes of the respiratory chain. F-type ATP synthases consist of two structural domains, F(1) - containing the extramembraneous catalytic core, and F(0) - containing the membrane proton channel, linked together by a central stalk and a peripheral stalk. During catalysis, ATP synthesis in the catalytic domain of F(1) is coupled via a rotary mechanism of the central stalk subunits to proton translocation. Part of the complex F(0) domain and the peripheral stalk, which acts as a stator to hold the catalytic alpha/ATP1(3)beta/ATP2(3) subcomplex and subunit a/ATP6 static relative to the rotary elements. The polypeptide is ATP synthase subunit d, mitochondrial (Pichia angusta (Yeast)).